The chain runs to 112 residues: FK506-binding protein 1A (112 aa).

A PPIase FKBP-type domain is found at Gly20–Asn108.

Belongs to the FKBP-type PPIase family. FKBP1 subfamily.

Its subcellular location is the cytoplasm. The enzyme catalyses [protein]-peptidylproline (omega=180) = [protein]-peptidylproline (omega=0). With respect to regulation, inhibited by both FK506 and rapamycin. Functionally, PPIases accelerate the folding of proteins. It catalyzes the cis-trans isomerization of proline imidic peptide bonds in oligopeptides. The chain is FK506-binding protein 1A (fpr1A) from Aspergillus fumigatus (strain ATCC MYA-4609 / CBS 101355 / FGSC A1100 / Af293) (Neosartorya fumigata).